The following is a 654-amino-acid chain: Endoplasmic reticulum chaperone BiP (654 aa).

Positions 1 to 18 (MKLSLVAAMLLLLSAARA) are cleaved as a signal peptide. Residues 1-80 (MKLSLVAAML…EGERLIGDAA (80 aa)) are required for interaction with ELAPOR1. 36–39 (GTTY) lines the ATP pocket. Serine 86 is modified (phosphoserine). An ATP-binding site is contributed by lysine 96. Residue lysine 125 is modified to N6-acetyllysine. A nucleotide-binding (NBD) region spans residues 125 to 280 (KPYIQVDIGG…KKKTGKDVRK (156 aa)). At tyrosine 160 the chain carries 3'-nitrotyrosine. Lysine 213 carries the post-translational modification N6-acetyllysine. 227–229 (GGT) provides a ligand contact to ATP. At lysine 271 the chain carries N6-acetyllysine. 293–300 (EKAKRALS) contacts ATP. Position 326 is an N6-acetyllysine (lysine 326). Lysine 352 participates in a covalent cross-link: Glycyl lysine isopeptide (Lys-Gly) (interchain with G-Cter in SUMO2). The residue at position 353 (lysine 353) is an N6-acetyllysine; alternate. Residue lysine 353 forms a Glycyl lysine isopeptide (Lys-Gly) (interchain with G-Cter in SUMO1); alternate linkage. 364–367 (GSTR) is a binding site for ATP. The interval 409-419 (QDTGDLALLDV) is interdomain linker. A substrate-binding (SBD) region spans residues 420–500 (CPLTLGIETV…PRGVPQIEVT (81 aa)). At lysine 447 the chain carries N6-succinyllysine. Position 492 is an omega-N-methylarginine (arginine 492). The residue at position 518 (threonine 518) is an O-AMP-threonine; alternate. Position 518 is a phosphothreonine; alternate (threonine 518). Lysine 585 is subject to N6,N6,N6-trimethyllysine; by METTL21A; in vitro. Lysine 585 carries the post-translational modification N6,N6-dimethyllysine; alternate. Lysine 585 bears the N6-methyllysine; alternate mark. Lysine 591 is modified (N6-methyllysine). The tract at residues 633–654 (KLYGSAGPPPTGEEDTAEKDEL) is disordered. Phosphothreonine is present on residues threonine 643 and threonine 648. Residues 644-654 (GEEDTAEKDEL) are compositionally biased toward acidic residues. The Prevents secretion from ER signature appears at 651–654 (KDEL).

This sequence belongs to the heat shock protein 70 family. As to quaternary structure, monomer and homooligomer; homooligomerization via the interdomain linker inactivates the chaperone activity and acts as a storage of HSPA5/BiP molecules. Interacts with DNAJC1 (via J domain). Component of an EIF2 complex at least composed of CELF1/CUGBP1, CALR, CALR3, EIF2S1, EIF2S2, HSP90B1 and HSPA5. Part of a large chaperone multiprotein complex comprising DNAJB11, HSP90B1, HSPA5, HYOU, PDIA2, PDIA4, PDIA6, PPIB, SDF2L1, UGGT1 and very small amounts of ERP29, but not, or at very low levels, CALR nor CANX. Interacts with TMEM132A and TRIM21. May form a complex with ERLEC1, OS9, SEL1L and SYVN1. Interacts with DNAJC10. Interacts with DNAJB9/ERdj4; leading to recruit HSPA5/BiP to ERN1/IRE1. Interacts with ERN1/IRE1 (via luminal domain); the interaction takes place following interaction with DNAJB9/ERdj4 and leads to inactivate ERN1/IRE1, the interaction also competitively inhibits ERN1 interaction with MANF. Interacts directly with MANF (via SAP domain); the interaction inhibits ATP binding to HSPA5/BiP and subsequent nucleotide exchange. Interacts with EIF2AK3/PERK (via luminal domain); interaction leads to inactivate EIF2AK3/PERK. Interacts with MX1. Interacts with METTL23. Interacts with CEMIP; the interaction induces calcium leakage from the endoplasmic reticulum and cell migration. Interacts with PCSK4 form; the interaction takes place in the endoplasmic reticulum. Interacts with CIPC. Interacts with CCDC88B (via C-terminus); the interaction opposes ERN1-mediated JNK activation, protecting against apoptosis. Interacts with INPP5K; necessary for INPP5K localization at the endoplasmic reticulum. Interacts with MANF; the interaction is direct. Interacts with LOXL2; leading to activate the ERN1/IRE1-XBP1 pathway of the unfolded protein response. Interacts with CLU under stressed condition; interaction increases CLU protein stability; facilitates its retrotranslocation and redistribution to the mitochondria; cooperatively suppress stress-induced apoptosis by stabilizing mitochondrial membrane integrity. Interacts with CCDC47. Interacts with CLN3. Interacts with ELAPOR1; may regulate the function of HSPA5 in apoptosis and cell proliferation. Interacts with CASP7. Interacts with ILDR2; the interaction stabilizes ILDR2 expression. Interacts with ADAM7. In unstressed cells, AMPylation at Thr-518 by FICD inactivates the chaperome activity: AMPylated form is locked in a relatively inert state and only weakly stimulated by J domain-containing proteins. In response to endoplasmic reticulum stress, de-AMPylation by the same protein, FICD, restores the chaperone activity.

It is found in the endoplasmic reticulum lumen. The protein resides in the melanosome. Its subcellular location is the cytoplasm. The protein localises to the cell surface. It carries out the reaction ATP + H2O = ADP + phosphate + H(+). Its activity is regulated as follows. The chaperone activity is regulated by ATP-induced allosteric coupling of the nucleotide-binding (NBD) and substrate-binding (SBD) domains. In the ADP-bound and nucleotide-free (apo) states, the two domains have little interaction. In contrast, in the ATP-bound state the two domains are tightly coupled, which results in drastically accelerated kinetics in both binding and release of polypeptide substrates. J domain-containing co-chaperones (DNAJB9/ERdj4 or DNAJC10/ERdj5) stimulate the ATPase activity and are required for efficient substrate recognition by HSPA5/BiP. Homooligomerization inactivates participating HSPA5/BiP protomers and probably act as reservoirs to store HSPA5/BiP molecules when they are not needed by the cell. Functionally, endoplasmic reticulum chaperone that plays a key role in protein folding and quality control in the endoplasmic reticulum lumen. Involved in the correct folding of proteins and degradation of misfolded proteins via its interaction with DNAJC10/ERdj5, probably to facilitate the release of DNAJC10/ERdj5 from its substrate. Acts as a key repressor of the EIF2AK3/PERK and ERN1/IRE1-mediated unfolded protein response (UPR). In the unstressed endoplasmic reticulum, recruited by DNAJB9/ERdj4 to the luminal region of ERN1/IRE1, leading to disrupt the dimerization of ERN1/IRE1, thereby inactivating ERN1/IRE1. Also binds and inactivates EIF2AK3/PERK in unstressed cells. Accumulation of misfolded protein in the endoplasmic reticulum causes release of HSPA5/BiP from ERN1/IRE1 and EIF2AK3/PERK, allowing their homodimerization and subsequent activation. Plays an auxiliary role in post-translational transport of small presecretory proteins across endoplasmic reticulum (ER). May function as an allosteric modulator for SEC61 channel-forming translocon complex, likely cooperating with SEC62 to enable the productive insertion of these precursors into SEC61 channel. Appears to specifically regulate translocation of precursors having inhibitory residues in their mature region that weaken channel gating. May also play a role in apoptosis and cell proliferation. The polypeptide is Endoplasmic reticulum chaperone BiP (Pongo abelii (Sumatran orangutan)).